The sequence spans 294 residues: NADH-cytochrome b5 reductase 2 (294 aa).

The helical transmembrane segment at 11–27 threads the bilayer; sequence VLLPVVAAATSIGLVYH. The 105-residue stretch at 45 to 149 folds into the FAD-binding FR-type domain; the sequence is DEWIDLKLKK…KGPIVKWKWE (105 aa). 152–187 serves as a coordination point for FAD; the sequence is QFQSIALIGGGTGITPLYQLLHEITKNPEDKTKVKL.

The protein belongs to the flavoprotein pyridine nucleotide cytochrome reductase family. It depends on FAD as a cofactor.

The protein localises to the mitochondrion outer membrane. It catalyses the reaction 2 Fe(III)-[cytochrome b5] + NADH = 2 Fe(II)-[cytochrome b5] + NAD(+) + H(+). Functionally, may mediate the reduction of outer membrane cytochrome b5. The chain is NADH-cytochrome b5 reductase 2 (MCR1) from Meyerozyma guilliermondii (strain ATCC 6260 / CBS 566 / DSM 6381 / JCM 1539 / NBRC 10279 / NRRL Y-324) (Yeast).